Consider the following 444-residue polypeptide: Adenine permease AdeQ (444 aa).

The Cytoplasmic segment spans residues Met-1–Val-29. Residues Arg-30 to Ile-53 form a helical membrane-spanning segment. The Periplasmic portion of the chain corresponds to Leu-54 to Val-63. Residues Val-64–Phe-82 traverse the membrane as a helical segment. Over Ala-83–Asn-84 the chain is Cytoplasmic. Residues Leu-85–Phe-101 form a discontinuously helical membrane-spanning segment. Residues Val-102–Thr-113 lie on the Periplasmic side of the membrane. Residues Gly-114–Ile-133 traverse the membrane as a helical segment. Residues Arg-134–Leu-145 lie on the Cytoplasmic side of the membrane. Residues Arg-146 to Gly-166 traverse the membrane as a helical segment. The Periplasmic segment spans residues Val-167–Ser-182. The helical transmembrane segment at Ser-183–Ser-200 threads the bilayer. Topologically, residues Ser-201–Phe-204 are cytoplasmic. The helical transmembrane segment at His-205 to Gly-223 threads the bilayer. Residues Asp-224–Thr-251 lie on the Periplasmic side of the membrane. A helical transmembrane segment spans residues Leu-252 to Ala-280. Over Gly-281–Asn-293 the chain is Cytoplasmic. A helical membrane pass occupies residues Lys-294 to Ile-309. Residues Gly-310 to Thr-311 are Periplasmic-facing. The chain crosses the membrane as a discontinuously helical span at residues Ser-312–Gly-327. Over Gly-328–Gly-331 the chain is Cytoplasmic. The chain crosses the membrane as a helical span at residues Leu-332–Phe-346. Over Phe-347–Tyr-357 the chain is Periplasmic. A helical membrane pass occupies residues Ala-358 to Val-377. The Cytoplasmic segment spans residues Asn-378 to Phe-382. Residues Thr-383–Cys-418 constitute an intramembrane region (discontinuously helical). The Cytoplasmic segment spans residues Thr-419–Asp-444.

The protein belongs to the nucleobase:cation symporter-2 (NCS2) (TC 2.A.40) family. Azg-like subfamily.

The protein localises to the cell inner membrane. High-affinity transporter for adenine. The chain is Adenine permease AdeQ (adeQ) from Escherichia coli (strain K12).